Consider the following 134-residue polypeptide: Thioredoxin H2-2 (134 aa).

The disordered stretch occupies residues Met-1–Asp-20. Positions Ser-3 to Ser-130 constitute a Thioredoxin domain. Catalysis depends on nucleophile residues Cys-56 and Cys-59. An intrachain disulfide couples Cys-56 to Cys-59.

It belongs to the thioredoxin family. Plant H-type subfamily.

The protein localises to the cytoplasm. In terms of biological role, probable thiol-disulfide oxidoreductase that may be involved in the redox regulation of a number of cytosolic enzymes. This chain is Thioredoxin H2-2, found in Oryza sativa subsp. japonica (Rice).